The chain runs to 96 residues: Protein Vpr (96 aa).

Residues 1–42 (MEQAPADQGPQREPHNEWTLELLEELKQEAVRHFPRIWLHSL) form a homooligomerization region. 3 positions are modified to phosphoserine; by host: Ser-79, Ser-94, and Ser-96.

Belongs to the HIV-1 VPR protein family. As to quaternary structure, homooligomer, may form homodimer. Interacts with p6-gag region of the Pr55 Gag precursor protein through a (Leu-X-X)4 motif near the C-terminus of the P6gag protein. Interacts with host UNG. May interact with host RAD23A/HHR23A. Interacts with host VPRBP/DCAF1, leading to hijack the CUL4A-RBX1-DDB1-DCAF1/VPRBP complex, mediating ubiquitination of host proteins such as TERT and ZGPAT and arrest of the cell cycle in G2 phase. In terms of processing, phosphorylated on several residues by host. These phosphorylations regulate VPR activity for the nuclear import of the HIV-1 pre-integration complex.

The protein resides in the virion. Its subcellular location is the host nucleus. It localises to the host extracellular space. In terms of biological role, during virus replication, may deplete host UNG protein, and incude G2-M cell cycle arrest. Acts by targeting specific host proteins for degradation by the 26S proteasome, through association with the cellular CUL4A-DDB1 E3 ligase complex by direct interaction with host VPRPB/DCAF-1. Cell cycle arrest reportedly occurs within hours of infection and is not blocked by antiviral agents, suggesting that it is initiated by the VPR carried into the virion. Additionally, VPR induces apoptosis in a cell cycle dependent manner suggesting that these two effects are mechanistically linked. Detected in the serum and cerebrospinal fluid of AIDS patient, VPR may also induce cell death to bystander cells. Its function is as follows. During virus entry, plays a role in the transport of the viral pre-integration (PIC) complex to the host nucleus. This function is crucial for viral infection of non-dividing macrophages. May act directly at the nuclear pore complex, by binding nucleoporins phenylalanine-glycine (FG)-repeat regions. The polypeptide is Protein Vpr (Homo sapiens (Human)).